The primary structure comprises 251 residues: Methylthioribulose-1-phosphate dehydratase (251 aa).

The interval 1–26 is disordered; the sequence is MTSVCDATNEDKENGSESTESQDKEH. Residues 9–26 show a composition bias toward basic and acidic residues; sequence NEDKENGSESTESQDKEH. C100 serves as a coordination point for substrate. The Zn(2+) site is built by H118 and H120. E142 functions as the Proton donor/acceptor in the catalytic mechanism. Zn(2+) is bound at residue H198. Residues 232 to 251 are disordered; the sequence is MDPSAPPIEENHYYDVQQSQ.

This sequence belongs to the aldolase class II family. MtnB subfamily. It depends on Zn(2+) as a cofactor.

Its subcellular location is the cytoplasm. It catalyses the reaction 5-(methylsulfanyl)-D-ribulose 1-phosphate = 5-methylsulfanyl-2,3-dioxopentyl phosphate + H2O. It participates in amino-acid biosynthesis; L-methionine biosynthesis via salvage pathway; L-methionine from S-methyl-5-thio-alpha-D-ribose 1-phosphate: step 2/6. Catalyzes the dehydration of methylthioribulose-1-phosphate (MTRu-1-P) into 2,3-diketo-5-methylthiopentyl-1-phosphate (DK-MTP-1-P). Functions in the methionine salvage pathway. May play a role in apoptosis. This is Methylthioribulose-1-phosphate dehydratase from Salmo salar (Atlantic salmon).